The following is a 496-amino-acid chain: Splicing factor U2AF 65 kDa subunit (496 aa).

The segment covering 1-26 has biased composition (basic and acidic residues); the sequence is MSDHQDGMKLEDIERQFLDVAQREGG. The disordered stretch occupies residues 1 to 142; it reads MSDHQDGMKL…PKKYRFWDVP (142 aa). The segment covering 59-77 has biased composition (basic residues); the sequence is KKRKRSRSRDRDTRRRSRS. Basic and acidic residues-rich tracts occupy residues 78–96 and 105–138; these read RDRG…DRSR and GGRD…KYRF. 3 consecutive RRM domains span residues 184–266, 291–368, and 404–488; these read RRLY…RPRD, NKIF…LACA, and NMVT…YYDV.

In terms of assembly, forms a heterodimer with the U2AF small subunit.

The protein resides in the nucleus. Necessary for the splicing of pre-mRNA. Binds to the polypyrimidine tract of introns early during spliceosome assembly. The protein is Splicing factor U2AF 65 kDa subunit (uaf-1) of Caenorhabditis elegans.